Reading from the N-terminus, the 346-residue chain is D-amino-acid oxidase (346 aa).

9 residues coordinate FAD: Gly22, Ile24, Thr52, Thr53, Ser54, Ala58, Ala59, Leu60, and Thr187. D-proline is bound by residues Tyr227 and Arg284. Tyr227 and Arg284 together coordinate D-serine. FAD contacts are provided by Arg284, Gly311, Gly312, Gly314, and Thr316. Position 284 (Arg284) interacts with D-dopa. Gly312 is a D-proline binding site. Gly312 is a D-serine binding site. Gly312 is a D-dopa binding site. A Microbody targeting signal motif is present at residues 344 to 346; it reads SKL.

This sequence belongs to the DAMOX/DASOX family. FAD serves as cofactor.

The protein localises to the peroxisome matrix. The enzyme catalyses a D-alpha-amino acid + O2 + H2O = a 2-oxocarboxylate + H2O2 + NH4(+). It carries out the reaction D-serine + O2 + H2O = 3-hydroxypyruvate + H2O2 + NH4(+). The catalysed reaction is D-phenylalanine + O2 + H2O = 3-phenylpyruvate + H2O2 + NH4(+). It catalyses the reaction D-alanine + O2 + H2O = pyruvate + H2O2 + NH4(+). The enzyme catalyses D-arginine + O2 + H2O = 5-guanidino-2-oxopentanoate + H2O2 + NH4(+). It carries out the reaction D-methionine + O2 + H2O = 4-methylsulfanyl-2-oxobutanoate + H2O2 + NH4(+). The catalysed reaction is D-ornithine + O2 + H2O = 5-amino-2-oxopentanoate + H2O2 + NH4(+). It catalyses the reaction D-leucine + O2 + H2O = 4-methyl-2-oxopentanoate + H2O2 + NH4(+). The enzyme catalyses D-lysine + O2 + H2O = 6-amino-2-oxohexanoate + H2O2 + NH4(+). It carries out the reaction D-proline + O2 = 1-pyrroline-2-carboxylate + H2O2. The catalysed reaction is D-valine + O2 + H2O = 3-methyl-2-oxobutanoate + H2O2 + NH4(+). It catalyses the reaction D-histidine + O2 + H2O = 3-(imidazol-5-yl)pyruvate + H2O2 + NH4(+). Catalyzes the oxidative deamination of D-amino acids with broad substrate specificity. Has low in vitro and no in vivo activity on D-serine; primary D-serine degradation is performed by the D-serine dehydratase dsd. The chain is D-amino-acid oxidase (ddo-1) from Dictyostelium discoideum (Social amoeba).